Reading from the N-terminus, the 56-residue chain is Defensin-1 (56 aa).

The signal sequence occupies residues 1 to 24 (MKAIVVLLILALILCLYAMTTVEG). 3 disulfide bridges follow: Cys26–Cys45, Cys31–Cys53, and Cys35–Cys55.

The protein resides in the secreted. Functionally, antibacterial protein involved in the immune response to septic injury. When combined with 14.026 kDa and 14.059 kDa hemolymph antimicrobial peptides, it has a strong cooperative activity against the Gram-positive bacteria B.subtilis and S.aureus, and against the Gram-negative bacteria E.coli DH5-alpha and K.pneumoniae ATCC 138833. Does not show detectable antibacterial activity when present alone. Has no hemolytic activity in human erythrocytes. The sequence is that of Defensin-1 from Centruroides limpidus (Mexican scorpion).